A 428-amino-acid polypeptide reads, in one-letter code: Spliceosome RNA helicase DDX39B (428 aa).

Residues 1 to 19 (MAENDVDNELLDYEEDEVE) show a composition bias toward acidic residues. The segment at 1–35 (MAENDVDNELLDYEEDEVENAAGGDGSEAPPKKDV) is disordered. The Q motif signature appears at 45 to 73 (SGFRDFLLKPELLRAIVDCGFEHPSEVQH). Residues 76–249 (IPQAILGMDV…RKFMQDPMEI (174 aa)) enclose the Helicase ATP-binding domain. 89–96 (AKSGMGKT) contributes to the ATP binding site. A DECD box motif is present at residues 196-199 (DECD). The Helicase C-terminal domain occupies 261 to 422 (GLQQYYVKLK…ELPDEIDISS (162 aa)).

Belongs to the DEAD box helicase family. DECD subfamily. Component of the transcription/export (TREX) complex at least composed of ALYREF/THOC4, DDX39B, SARNP/CIP29, CHTOP and the THO subcomplex.

It localises to the nucleus. It is found in the nucleus speckle. The enzyme catalyses ATP + H2O = ADP + phosphate + H(+). In terms of biological role, involved in nuclear export of spliced and unspliced mRNA. Component of the TREX complex which is thought to couple mRNA transcription, processing and nuclear export, and specifically associates with spliced mRNA and not with unspliced pre-mRNA. The TREX complex is recruited to spliced mRNAs by a transcription-independent mechanism, binds to mRNA upstream of the exon-junction complex (EJC) and is recruited in a splicing- and cap-dependent manner to a region near the 5' end of the mRNA where it functions in mRNA export to the cytoplasm via the TAP/NXF1 pathway. Involved in transcription elongation and genome stability. Splice factor that is required for the first ATP-dependent step in spliceosome assembly and for the interaction of U2 snRNP with the branchpoint. Has both RNA-stimulated ATP binding/hydrolysis activity and ATP-dependent RNA unwinding activity. Even with the stimulation of RNA, the ATPase activity is weak. Can only hydrolyze ATP but not other NTPs. The RNA stimulation of ATPase activity does not have a strong preference for the sequence and length of the RNA. However, ssRNA stimulates the ATPase activity much more strongly than dsRNA. Can unwind 5' or 3' overhangs or blunt end RNA duplexes in vitro. The ATPase and helicase activities are not influenced by U2AF2; the effect of ALYREF/THOC4 is reported conflictingly. The sequence is that of Spliceosome RNA helicase DDX39B (DDX39B) from Gallus gallus (Chicken).